Here is a 2424-residue protein sequence, read N- to C-terminus: Voltage-dependent P/Q-type calcium channel subunit alpha-1A (2424 aa).

Topologically, residues 1–98 (MARFGDEMPA…KYAKKITEWP (98 aa)) are cytoplasmic. The I repeat unit spans residues 85–363 (NVVRKYAKKI…LVLGVLSGEF (279 aa)). Residues 99 to 117 (PFEYMILATIIANCIVLAL) form a helical membrane-spanning segment. Residues 118–135 (EQHLPDDDKTPMSERLDD) lie on the Extracellular side of the membrane. The chain crosses the membrane as a helical span at residues 136–155 (TEPYFIGIFCFEAGIKIIAL). At 156–167 (GFAFHKGSYLRN) the chain is on the cytoplasmic side. The helical transmembrane segment at 168–185 (GWNVMDFVVVLTGILATV) threads the bilayer. The Extracellular segment spans residues 186–190 (GTEFD). Residues 191–209 (LRTLRAVRVLRPLKLVSGI) traverse the membrane as a helical segment. Over 210–228 (PSLQVVLKSIMKAMIPLLQ) the chain is Cytoplasmic. A helical transmembrane segment spans residues 229-248 (IGLLLFFAILIFAIIGLEFY). Over 249–335 (MGKFHTTCFE…NSNDASGNTW (87 aa)) the chain is Extracellular. Asn283 carries N-linked (GlcNAc...) asparagine glycosylation. Glu318 contributes to the Ca(2+) binding site. Residues 336-360 (NWLYFIPLIIIGSFFMLNLVLGVLS) form a helical membrane-spanning segment. Topologically, residues 361-487 (GEFAKERERV…FYIRRMVKTQ (127 aa)) are cytoplasmic. The segment at 383–400 (QQIERELNGYMEWISKAE) is binding to the beta subunit. Thr409 carries the post-translational modification Phosphothreonine. 2 positions are modified to phosphoserine: Ser448 and Ser451. The stretch at 473 to 717 (ERRMRFYIRR…VFLAIAVDNL (245 aa)) is one II repeat. A helical membrane pass occupies residues 488–506 (AFYWTVLSLVALNTLCVAI). Over 507-521 (VHYNQPEWLSDFLYY) the chain is Extracellular. The helical transmembrane segment at 522–541 (AEFIFLGLFMSEMFIKMYGL) threads the bilayer. Residues 542–549 (GTRPYFHS) lie on the Cytoplasmic side of the membrane. Residues 550–568 (SFNCFDCGVIIGSIFEVIW) traverse the membrane as a helical segment. Topologically, residues 569 to 578 (AVIKPGTSFG) are extracellular. Residues 579–597 (ISVLRALRLLRIFKVTKYW) form a helical membrane-spanning segment. Residues 598–616 (ASLRNLVVSLLNSMKSIIS) are Cytoplasmic-facing. A helical transmembrane segment spans residues 617–636 (LLFLLFLFIVVFALLGMQLF). Topologically, residues 637–689 (GGQFNFDEGTPPTNFDTFPAAIMTVFQILTGEDWNEVMYDGIKSQGGVQGGMV) are extracellular. Glu668 contacts Ca(2+). Residues 690-714 (FSIYFIVLTLFGNYTLLNVFLAIAV) form a helical membrane-spanning segment. Topologically, residues 715–1253 (DNLANAQELT…RLCHYILNLR (539 aa)) are cytoplasmic. Residues Ser750, Ser753, and Ser790 each carry the phosphoserine modification. The disordered stretch occupies residues 819 to 1229 (HLDRPLVVDP…GEDGPKPMPP (411 aa)). Composition is skewed to basic and acidic residues over residues 893–912 (ELSR…REGG), 922–931 (EAERGKAGDP), and 969–996 (RPGE…RSGE). The segment covering 1053-1065 (PNLSTTRPIQQDL) has biased composition (polar residues). A phosphoserine mark is found at Ser1091 and Ser1104. Over residues 1110–1140 (SSTDPAGPTPATAANPQNSTASRRTPNNPGN) the composition is skewed to low complexity. Residues 1151–1168 (ENSLIVTNPSTAQTNSAK) show a composition bias toward polar residues. Over residues 1204–1214 (LPKKEDEKKEE) the composition is skewed to basic and acidic residues. One copy of the III repeat lies at 1240-1523 (NPLRRLCHYI…IFVALIIITF (284 aa)). The chain crosses the membrane as a helical span at residues 1254–1272 (YFEMCILMVIAMSSIALAA). Over 1273 to 1288 (EDPVQPNAPRNNVLRY) the chain is Extracellular. The helical transmembrane segment at 1289–1308 (FDYVFTGVFTFEMVIKMIDL) threads the bilayer. Over 1309 to 1320 (GLVLHQGAYFRD) the chain is Cytoplasmic. Residues 1321 to 1339 (LWNILDFIVVSGALVAFAF) form a helical membrane-spanning segment. Over 1340-1350 (TGNSKGKDINT) the chain is Extracellular. Residues 1351-1369 (IKSLRVLRVLRPLKTIKRL) traverse the membrane as a helical segment. The Cytoplasmic segment spans residues 1370–1388 (PKLKAVFDCVVNSLKNVFN). A helical transmembrane segment spans residues 1389–1408 (ILIVYMLFMFIFAVVAVQLF). Over 1409–1495 (KGKFFHCTDE…QGPSPGYRME (87 aa)) the chain is Extracellular. Glu1469 lines the Ca(2+) pocket. Residues 1496–1520 (MSIFYVVYFVVFPFFFVNIFVALII) form a helical membrane-spanning segment. Residues 1521–1575 (ITFQEQGDKMMEEYSLEKNERACIDFAISAKPLTRHMPQNKQSFQYRMWQFVVSP) lie on the Cytoplasmic side of the membrane. Residues 1560 to 1823 (NKQSFQYRMW…LFVAVIMDNF (264 aa)) form an IV repeat. Residues 1576 to 1604 (PFEYTIMAMIALNTIVLMMKFYGASVAYD) form a helical membrane-spanning segment. Residues 1605–1609 (NALKV) lie on the Extracellular side of the membrane. Residues 1610–1629 (FNIVFTSLFSLECLLKVLAF) traverse the membrane as a helical segment. Residues 1630–1637 (GILNYFRD) lie on the Cytoplasmic side of the membrane. Residues 1638-1656 (AWNIFDFVTVLGSITDILV) traverse the membrane as a helical segment. Over 1657–1665 (TEFGNNFIN) the chain is Extracellular. The N-linked (GlcNAc...) asparagine glycan is linked to Asn1665. A helical membrane pass occupies residues 1666–1684 (LSFLRLFRAARLIKLLRQG). The Cytoplasmic segment spans residues 1685-1703 (YTIRILLWTFVQSFKALPY). A helical membrane pass occupies residues 1704–1723 (VCLLIAMLFFIYAIIGMQVF). Residues 1724-1795 (GNIGIDMEDE…ILTPECGNEF (72 aa)) are Extracellular-facing. Residues 1796-1820 (AYFYFVSFIFLCSFLMLNLFVAVIM) traverse the membrane as a helical segment. Topologically, residues 1821-2424 (DNFEYLTRDS…GGPRASAPSP (604 aa)) are cytoplasmic. Thr1993 carries the post-translational modification Phosphothreonine. The tract at residues 1997–2424 (FQRMEPPPDE…GGPRASAPSP (428 aa)) is disordered. The span at 2037–2053 (SWVTQRAQEMFQKTGTW) shows a compositional bias: polar residues. Residues Ser2054, Ser2072, Ser2084, Ser2086, Ser2127, and Ser2148 each carry the phosphoserine modification. Over residues 2074-2090 (EMREMSQDGYSDSEHCL) the composition is skewed to basic and acidic residues. 2 stretches are compositionally biased toward basic and acidic residues: residues 2142-2159 (RRLD…ENQR) and 2200-2210 (PSREREQERGR). Residues 2211–2229 (PKDRKHRPHHHHHHHHHPG) are compositionally biased toward basic residues. Residues 2249-2262 (VARVRPARAPALAH) show a composition bias toward low complexity. Over residues 2280-2305 (RRARRPRPRQRRRPRRRRGGGGRALR) the composition is skewed to basic residues.

The protein belongs to the calcium channel alpha-1 subunit (TC 1.A.1.11) family. CACNA1A subfamily. In terms of assembly, voltage-dependent calcium channels are multisubunit complexes, consisting of alpha-1, alpha-2, beta and delta subunits in a 1:1:1:1 ratio. The channel activity is directed by the pore-forming and voltage-sensitive alpha-1 subunit. In many cases, this subunit is sufficient to generate voltage-sensitive calcium channel activity. The auxiliary subunits beta and alpha-2/delta linked by a disulfide bridge regulate the channel activity. Interacts with CABP1. Interacts with the spider omega-agatoxin-IVA (AC P30288). Interacts with TSPOAP1. Brain specific. Purkinje cells contain predominantly P-type VSCC, the Q-type being a prominent calcium current in cerebellar granule cells.

Its subcellular location is the cell membrane. The enzyme catalyses Ca(2+)(in) = Ca(2+)(out). In terms of biological role, voltage-sensitive calcium channels (VSCC) mediate the entry of calcium ions into excitable cells and are also involved in a variety of calcium-dependent processes, including muscle contraction, hormone or neurotransmitter release, gene expression, cell motility, cell division and cell death. The isoform alpha-1A gives rise to P and/or Q-type calcium currents. P/Q-type calcium channels belong to the 'high-voltage activated' (HVA) group and are specifically blocked by the spider omega-agatoxin-IVA (AC P54282). They are however insensitive to dihydropyridines (DHP). This is Voltage-dependent P/Q-type calcium channel subunit alpha-1A (CACNA1A) from Oryctolagus cuniculus (Rabbit).